Consider the following 148-residue polypeptide: MKPRHKKLAIIASSVTALGVASVLVLNAFQSNLVFFFSPTQVANNEAPVGKSFRIGGLVEEGSVKRQADGVTVNFLVTDTAKVIPVVYTGILPDLFKEGKGVVAQGKLASDGIFRADEVLAKHDENYMPPEAAGALDQADKARKTVMQ.

At 1–7 the chain is on the cytoplasmic side; the sequence is MKPRHKK. A helical; Signal-anchor for type II membrane protein transmembrane segment spans residues 8–28; sequence LAIIASSVTALGVASVLVLNA. Topologically, residues 29-148 are periplasmic; that stretch reads FQSNLVFFFS…ADKARKTVMQ (120 aa). Heme-binding residues include His123 and Tyr127.

The protein belongs to the CcmE/CycJ family.

The protein resides in the cell inner membrane. Heme chaperone required for the biogenesis of c-type cytochromes. Transiently binds heme delivered by CcmC and transfers the heme to apo-cytochromes in a process facilitated by CcmF and CcmH. In Nitrosospira multiformis (strain ATCC 25196 / NCIMB 11849 / C 71), this protein is Cytochrome c-type biogenesis protein CcmE.